The following is a 470-amino-acid chain: Uronate isomerase (470 aa).

The protein belongs to the metallo-dependent hydrolases superfamily. Uronate isomerase family.

It carries out the reaction D-glucuronate = D-fructuronate. The catalysed reaction is aldehydo-D-galacturonate = keto-D-tagaturonate. It functions in the pathway carbohydrate metabolism; pentose and glucuronate interconversion. The polypeptide is Uronate isomerase (Sphingopyxis alaskensis (strain DSM 13593 / LMG 18877 / RB2256) (Sphingomonas alaskensis)).